A 921-amino-acid polypeptide reads, in one-letter code: Probable serine/threonine-protein kinase DDB_G0275165 (921 aa).

Positions Phe-23–Ile-277 constitute a Protein kinase domain. Residues Ile-29 to Val-37 and Lys-50 contribute to the ATP site. Residue Asp-147 is the Proton acceptor of the active site. Disordered regions lie at residues Asp-289–Arg-453, Arg-465–Asp-492, Arg-530–Asn-571, Asn-583–Ile-653, Ser-671–Asn-698, Ile-737–Leu-813, Ser-833–Phe-858, and Phe-877–Lys-921. 3 stretches are compositionally biased toward low complexity: residues Asn-310–Asn-352, Ser-400–Asn-412, and Asn-429–Asn-445. Low complexity-rich tracts occupy residues Asn-539–Lys-550 and Asn-583–Ser-638. Residues Pro-643–Ile-653 are compositionally biased toward polar residues. Low complexity-rich tracts occupy residues Thr-748–Thr-775, Gln-842–Gln-857, and Thr-892–Pro-910.

The protein belongs to the protein kinase superfamily. TKL Ser/Thr protein kinase family.

The enzyme catalyses L-seryl-[protein] + ATP = O-phospho-L-seryl-[protein] + ADP + H(+). It carries out the reaction L-threonyl-[protein] + ATP = O-phospho-L-threonyl-[protein] + ADP + H(+). This is Probable serine/threonine-protein kinase DDB_G0275165 from Dictyostelium discoideum (Social amoeba).